The chain runs to 214 residues: Small ribosomal subunit protein uS5 (214 aa).

One can recognise an S5 DRBM domain in the interval 54-117; that stretch reads MKYEVIDIGM…RDAKMHVIPV (64 aa).

It belongs to the universal ribosomal protein uS5 family. As to quaternary structure, part of the 30S ribosomal subunit. Contacts protein S4.

With S4 and S12 plays an important role in translational accuracy. This Metallosphaera sedula (strain ATCC 51363 / DSM 5348 / JCM 9185 / NBRC 15509 / TH2) protein is Small ribosomal subunit protein uS5.